Here is a 416-residue protein sequence, read N- to C-terminus: Imidazolonepropionase (416 aa).

Residues His-78 and His-80 each coordinate Fe(3+). His-78 and His-80 together coordinate Zn(2+). Arg-87, Tyr-150, and His-183 together coordinate 4-imidazolone-5-propanoate. Residue Tyr-150 coordinates N-formimidoyl-L-glutamate. A Fe(3+)-binding site is contributed by His-248. His-248 contributes to the Zn(2+) binding site. Gln-251 provides a ligand contact to 4-imidazolone-5-propanoate. Asp-323 provides a ligand contact to Fe(3+). Asp-323 serves as a coordination point for Zn(2+). N-formimidoyl-L-glutamate is bound by residues Asn-325 and Gly-327. Thr-328 contacts 4-imidazolone-5-propanoate.

Belongs to the metallo-dependent hydrolases superfamily. HutI family. Requires Zn(2+) as cofactor. The cofactor is Fe(3+).

It localises to the cytoplasm. It catalyses the reaction 4-imidazolone-5-propanoate + H2O = N-formimidoyl-L-glutamate. Its pathway is amino-acid degradation; L-histidine degradation into L-glutamate; N-formimidoyl-L-glutamate from L-histidine: step 3/3. Catalyzes the hydrolytic cleavage of the carbon-nitrogen bond in imidazolone-5-propanoate to yield N-formimidoyl-L-glutamate. It is the third step in the universal histidine degradation pathway. The sequence is that of Imidazolonepropionase from Vibrio campbellii (strain ATCC BAA-1116).